Reading from the N-terminus, the 549-residue chain is Cation/acetate symporter ActP (549 aa).

The next 13 helical transmembrane spans lie at 33–53, 77–97, 103–123, 148–168, 183–203, 206–226, 262–282, 303–323, 355–375, 404–424, 428–448, 464–484, and 493–513; these read WQAIIMFLIFVVFTLGITYWA, LAIAGDYMSAASFLGISALVF, GLIYSLGFLVGWPIILFLIAE, ILSACGSLVVVALYLIAQMVG, IAVVLVGVLMMMYVLFGGMLA, WVQIIKAVLLLFGASFMAFMV, ISALSLGLGLMFGTAGLPHIL, GFMGYFYILTFIIGFGAIMLV, LFLGFISAVAFATILAVVAGL, VSKITVLVLGVIAIILGILFE, IAFMVGLAFAIAASCNFPIIL, GGWLGLLTAVVLMILGPTIWV, and IFPYEYPALFSISVAFLGIWF.

This sequence belongs to the sodium:solute symporter (SSF) (TC 2.A.21) family.

Its subcellular location is the cell inner membrane. Transports acetate. The sequence is that of Cation/acetate symporter ActP from Salmonella newport (strain SL254).